Reading from the N-terminus, the 86-residue chain is Large ribosomal subunit protein bL27 (86 aa).

The tract at residues 1–31 (MAHKKAGGSSRNGRDSAGQRRGVKKFGGEPV) is disordered.

It belongs to the bacterial ribosomal protein bL27 family.

The protein is Large ribosomal subunit protein bL27 of Desulfotalea psychrophila (strain LSv54 / DSM 12343).